The sequence spans 319 residues: MAATKPAFNPPGKKGDIIFSVLVKLAALIVLLMLGGIIVSLIISSWPSIQKFGLAFLWTKEWDAPNDIYGALVPIYGTLVTSFIALLIAVPVSFGIALFLTELAPGWLKRPLGIAIELLAAIPSIVYGMWGLFIFAPLFAVYFQEPVGNIMSNIPIVGALFSGPAFGIGILAAGVILAIMIIPYIAAVMRDVFEQTPVMMKESAYGIGCTTWEVIWRIVLPFTKNGVIGGIMLGLGRALGETMAVTFIIGNTYQLDSASLYMPGNSITSALANEFAEAESGLHVAALMELGLILFVITFIVLAASKFMIMRLAKNEGAR.

Residues 1 to 24 (MAATKPAFNPPGKKGDIIFSVLVK) lie on the Cytoplasmic side of the membrane. A helical transmembrane segment spans residues 25–44 (LAALIVLLMLGGIIVSLIIS). Residues 45–74 (SWPSIQKFGLAFLWTKEWDAPNDIYGALVP) lie on the Periplasmic side of the membrane. A helical transmembrane segment spans residues 75–94 (IYGTLVTSFIALLIAVPVSF). An ABC transmembrane type-1 domain is found at 75–305 (IYGTLVTSFI…VITFIVLAAS (231 aa)). The Cytoplasmic portion of the chain corresponds to 95–117 (GIALFLTELAPGWLKRPLGIAIE). Residues 118–137 (LLAAIPSIVYGMWGLFIFAP) traverse the membrane as a helical segment. The Periplasmic portion of the chain corresponds to 138–167 (LFAVYFQEPVGNIMSNIPIVGALFSGPAFG). Residues 168–187 (IGILAAGVILAIMIIPYIAA) traverse the membrane as a helical segment. Residues 188–232 (VMRDVFEQTPVMMKESAYGIGCTTWEVIWRIVLPFTKNGVIGGIM) lie on the Cytoplasmic side of the membrane. A helical membrane pass occupies residues 233-252 (LGLGRALGETMAVTFIIGNT). The Periplasmic segment spans residues 253–283 (YQLDSASLYMPGNSITSALANEFAEAESGLH). The chain crosses the membrane as a helical span at residues 284–303 (VAALMELGLILFVITFIVLA). At 304 to 319 (ASKFMIMRLAKNEGAR) the chain is on the cytoplasmic side.

The protein belongs to the binding-protein-dependent transport system permease family. CysTW subfamily.

Its subcellular location is the cell inner membrane. In terms of biological role, part of the binding-protein-dependent transport system for phosphate; probably responsible for the translocation of the substrate across the membrane. This chain is Phosphate transport system permease protein PstC (pstC), found in Escherichia coli O157:H7.